The primary structure comprises 36 residues: Conotoxin Bu21 (36 aa).

Residues 1–21 (DGANAEATDNKPGVFERDEKK) constitute a propeptide that is removed on maturation. 2 cysteine pairs are disulfide-bonded: Cys22–Cys28 and Cys23–Cys34.

Belongs to the conotoxin A superfamily. In terms of tissue distribution, expressed by the venom duct.

It localises to the secreted. The chain is Conotoxin Bu21 from Conus bullatus (Bubble cone).